The sequence spans 576 residues: MSKRAKKRDKSTVEILQVYSASRDEEQMTDLKKTDYLPYLFNLVMPKQFYKSPNRIVMARLYPDVQKHDEQAAEYFEGFQTPCFDLPTKLFPEKTPIDKIVFMPKVMLPMGFEAGGVFGPGVLPRRCYPVDLISPDHKGPMPPLFVGLRGMKVSLSSMINTFLNMYDSPDGKEPHLYEMHATNHHYENDLAPEELMLRPDFTLSVAYTLPASMCLPSPYPYPSVPEQDNIYTPDLSKVLMLMPHQFNITVAILSTVNNPHDPSVAFATMGDDEECPKFELPNDVFPICEGVNRPIFLPKRFMPKGFDACCVFKPGSLSELWYIKRIGRFGTPQEQYNCSITPPLFVGKYTRNAASINMLEEISVHFDQKARECAKSLARLRLDALRLNSRNGSTKGFLVMESDKPTTPAGAYSVESYEEASEDGCVAKVTQECATESTDTRDDGINTADYQSQFPELEPDSEPEPEPEPQTEDEGEDEGDKKCLSCFKVDSDIDLISHAIAEMGVAELSMLGEVDPVPGVDTKLALDQLHEVFETRDEIRSNIDDLMRDHVCRMERDIMLALRQPIRKCSACAKHS.

A disordered region spans residues 454 to 481 (FPELEPDSEPEPEPEPQTEDEGEDEGDK). Residues 457–478 (LEPDSEPEPEPEPQTEDEGEDE) show a composition bias toward acidic residues.

This sequence belongs to the DM7 family.

The polypeptide is DM7 family protein GD16138 (Drosophila simulans (Fruit fly)).